A 174-amino-acid polypeptide reads, in one-letter code: Shikimate kinase (174 aa).

Residue 15–20 (GTGKST) coordinates ATP. Ser19 contacts Mg(2+). Residues Asp37, Arg61, and Gly82 each contribute to the substrate site. Arg120 contacts ATP. A substrate-binding site is contributed by Arg138.

This sequence belongs to the shikimate kinase family. Monomer. Requires Mg(2+) as cofactor.

The protein localises to the cytoplasm. The catalysed reaction is shikimate + ATP = 3-phosphoshikimate + ADP + H(+). It participates in metabolic intermediate biosynthesis; chorismate biosynthesis; chorismate from D-erythrose 4-phosphate and phosphoenolpyruvate: step 5/7. In terms of biological role, catalyzes the specific phosphorylation of the 3-hydroxyl group of shikimic acid using ATP as a cosubstrate. In Staphylococcus aureus (strain MRSA252), this protein is Shikimate kinase.